Here is a 358-residue protein sequence, read N- to C-terminus: Dynein axonemal assembly factor 10 (358 aa).

6 WD repeats span residues 63 to 105 (EKKH…QPVF), 109 to 154 (AHAS…APVA), 162 to 205 (NNVR…VRWE), 207 to 249 (NVRN…PKKG), 258 to 298 (TAGA…QRKV), and 320 to 358 (ISTQ…LNKV).

As to quaternary structure, interacts with PIH1D1; the interaction associates DNAAF10 with the R2TP complex. Interacts with several dynein axonemal assembly factors.

The protein localises to the dynein axonemal particle. Key assembly factor specifically required for the stability of axonemal dynein heavy chains in cytoplasm. In Chlamydomonas reinhardtii (Chlamydomonas smithii), this protein is Dynein axonemal assembly factor 10 (dnaaf10).